A 156-amino-acid polypeptide reads, in one-letter code: Small ribosomal subunit protein uS7 (156 aa).

The protein belongs to the universal ribosomal protein uS7 family. Part of the 30S ribosomal subunit. Contacts proteins S9 and S11.

One of the primary rRNA binding proteins, it binds directly to 16S rRNA where it nucleates assembly of the head domain of the 30S subunit. Is located at the subunit interface close to the decoding center, probably blocks exit of the E-site tRNA. The polypeptide is Small ribosomal subunit protein uS7 (Pseudomonas syringae pv. syringae (strain B728a)).